A 192-amino-acid chain; its full sequence is UPF0149 protein YgfB (192 aa).

This sequence belongs to the UPF0149 family.

This Salmonella typhi protein is UPF0149 protein YgfB.